Reading from the N-terminus, the 99-residue chain is MLIVLFRSKDIRGGRFVRPILIFRTKRSWILFRIGPERRREAEMPTDLCLFSNSPDPIVPVFGTSSAKVTEWVSHQSNPFDKSGVILDIIFYIYRNIIE.

The protein belongs to the ycf15 family.

It is found in the plastid. It localises to the chloroplast. This is an uncharacterized protein from Saccharum hybrid (Sugarcane).